The sequence spans 794 residues: ATP-dependent RNA helicase SUPV3L1, mitochondrial (794 aa).

The N-terminal 30 residues, 1–30 (MRRCAWPLLRLSSRVGLALRHGGAVRLRQA), are a transit peptide targeting the mitochondrion. The 141-residue stretch at 182–322 (EARAIQRKII…AIDLVTELMY (141 aa)) folds into the Helicase ATP-binding domain. 195-202 (GPTNSGKT) provides a ligand contact to ATP. A Helicase C-terminal domain is found at 341–506 (VLDYALESLD…GLHPTPEQIE (166 aa)). Disordered stretches follow at residues 678 to 741 (EVMS…HGRG) and 764 to 794 (EWQDQHRSGRYGLASKRNDQSSSKEMGKKKK). A compositionally biased stretch (basic and acidic residues) spans 689–704 (TKRDARTVSDHRDAKS).

It belongs to the helicase family. Requires Mg(2+) as cofactor. The cofactor is Mn(2+).

The protein localises to the nucleus. Its subcellular location is the mitochondrion matrix. It localises to the mitochondrion nucleoid. The enzyme catalyses ATP + H2O = ADP + phosphate + H(+). Major helicase player in mitochondrial RNA metabolism. Component of the mitochondrial degradosome (mtEXO) complex, that degrades 3' overhang double-stranded RNA with a 3'-to-5' directionality in an ATP-dependent manner. ATPase and ATP-dependent multisubstrate helicase, able to unwind double-stranded (ds) DNA and RNA, and RNA/DNA heteroduplexes in the 5'-to-3' direction. Plays a role in the RNA surveillance system in mitochondria; regulates the stability of mature mRNAs, the removal of aberrantly formed mRNAs and the rapid degradation of non coding processing intermediates. Also implicated in recombination and chromatin maintenance pathways. May protect cells from apoptosis. Associates with mitochondrial DNA. This Gallus gallus (Chicken) protein is ATP-dependent RNA helicase SUPV3L1, mitochondrial (SUPV3L1).